A 246-amino-acid polypeptide reads, in one-letter code: Acetoacetate decarboxylase (246 aa).

K116 serves as the catalytic Schiff-base intermediate with acetoacetate.

This sequence belongs to the ADC family.

It catalyses the reaction acetoacetate + H(+) = acetone + CO2. Functionally, catalyzes the conversion of acetoacetate to acetone and carbon dioxide. The protein is Acetoacetate decarboxylase of Burkholderia multivorans (strain ATCC 17616 / 249).